Consider the following 617-residue polypeptide: V-type proton ATPase catalytic subunit A (617 aa).

Thr136 carries the post-translational modification Phosphothreonine. ATP is bound at residue 250-257 (GAFGCGKT). Ser384 carries the post-translational modification Phosphoserine; by AMPK.

It belongs to the ATPase alpha/beta chains family. In terms of assembly, V-ATPase is a heteromultimeric enzyme made up of two complexes: the ATP-hydrolytic V1 complex and the proton translocation V0 complex. The V1 complex consists of three catalytic AB heterodimers that form a heterohexamer, three peripheral stalks each consisting of EG heterodimers, one central rotor including subunits D and F, and the regulatory subunits C and H. The proton translocation complex V0 consists of the proton transport subunit a, a ring of proteolipid subunits c9c'', rotary subunit d, subunits e and f, and the accessory subunits ATP6AP1/Ac45 and ATP6AP2/PRR. Interacts with the V0 complex V-ATPase subunit a4 ATP6V0A4. Interacts with WFS1. Interacts with alpha-crystallin B chain/CRYAB and with MTOR, forming a ternary complex. In terms of processing, phosphorylation at Ser-384 by AMPK down-regulates its enzyme activity. Expressed in brain (at protein level).

The protein localises to the cytoplasm. It is found in the cytosol. It localises to the cytoplasmic vesicle. Its subcellular location is the secretory vesicle. The protein resides in the clathrin-coated vesicle membrane. The protein localises to the lysosome. It catalyses the reaction ATP + H2O + 4 H(+)(in) = ADP + phosphate + 5 H(+)(out). With respect to regulation, ATP hydrolysis occurs at the interface between the nucleotide-binding domains of subunits A and B. ATP hydrolysis triggers a conformational change in the subunits D and F, which induces a shift of subunit d. The c-ring is subsequently rotated and results in a continuous proton translocation across the membrane. The V-ATPase is inhibited by bafilomycin A. In terms of biological role, catalytic subunit of the V1 complex of vacuolar(H+)-ATPase (V-ATPase), a multisubunit enzyme composed of a peripheral complex (V1) that hydrolyzes ATP and a membrane integral complex (V0) that translocates protons. V-ATPase is responsible for acidifying and maintaining the pH of intracellular compartments and in some cell types, is targeted to the plasma membrane, where it is responsible for acidifying the extracellular environment. In aerobic conditions, involved in intracellular iron homeostasis, thus triggering the activity of Fe(2+) prolyl hydroxylase (PHD) enzymes, and leading to HIF1A hydroxylation and subsequent proteasomal degradation. May play a role in neurite development and synaptic connectivity. In Bos taurus (Bovine), this protein is V-type proton ATPase catalytic subunit A (ATP6V1A).